The primary structure comprises 314 residues: Serine/threonine-protein phosphatase PP2A-5 catalytic subunit (314 aa).

Mn(2+) is bound by residues D62, H64, D90, and N122. The active-site Proton donor is the H123. Residues H172 and H246 each coordinate Mn(2+).

It belongs to the PPP phosphatase family. PP-2A subfamily. Requires Mn(2+) as cofactor.

Its subcellular location is the cytoplasm. The enzyme catalyses O-phospho-L-seryl-[protein] + H2O = L-seryl-[protein] + phosphate. It carries out the reaction O-phospho-L-threonyl-[protein] + H2O = L-threonyl-[protein] + phosphate. This chain is Serine/threonine-protein phosphatase PP2A-5 catalytic subunit (NPP5), found in Nicotiana tabacum (Common tobacco).